Here is a 513-residue protein sequence, read N- to C-terminus: MQSVLVLDFGSQYTQLIARRIRELGIYSEILPYSTTPETIREHNPRAIILSGGPTSVYGDSAILPHPGIFSLGLPILGICYGLQAIANHFGGAVESSSKQEFGRAKILVDRSADHESLLFEGFPDSDVWMSHGDKVTRMPEGFRVTASSGNSEMCAIESYGSKAALKIYGLQFHPEVQHSLYGKQLLGNFLLNIAGITPDWSSKSFIDHQIEDIRERAGNNTVICGISGGVDSTVAAVLVSKAIGKQLHCVFVDNGLLRKNEAEKVMQFLKPLGLKVTLADSRDLFLTRLKGVASPEKKRKIIGRTFIRVFEEHIHEEKFLVQGTLYPDVIESVSVKGPSETIKSHHNVGGLPKRMKLKLIEPLRELFKDEVRAVGRELGIAEDILMRHPFPGPGLAVRVLGSVNPERVEILQNADEIFIEELKSSGLYQQVWQAFSVLLPVQSVGVMGDKRTYENVLALRAVESTDGMTADWAHLPHDFLAKVSNRIINEVRGINRVAYDISSKPPATIEWE.

Residues Ser3–Asp200 form the Glutamine amidotransferase type-1 domain. Catalysis depends on Cys80, which acts as the Nucleophile. Residues His174 and Glu176 contribute to the active site. The region spanning Trp201 to Arg388 is the GMPS ATP-PPase domain. Ser228–Thr234 is an ATP binding site.

As to quaternary structure, homodimer.

It carries out the reaction XMP + L-glutamine + ATP + H2O = GMP + L-glutamate + AMP + diphosphate + 2 H(+). The protein operates within purine metabolism; GMP biosynthesis; GMP from XMP (L-Gln route): step 1/1. In terms of biological role, catalyzes the synthesis of GMP from XMP. The chain is GMP synthase [glutamine-hydrolyzing] from Chlorobium phaeovibrioides (strain DSM 265 / 1930) (Prosthecochloris vibrioformis (strain DSM 265)).